A 363-amino-acid polypeptide reads, in one-letter code: tRNA N6-adenosine threonylcarbamoyltransferase (363 aa).

Positions 121 and 125 each coordinate Fe cation. Substrate-binding positions include 143–147 (LASGG), aspartate 176, glycine 189, and asparagine 287. Aspartate 315 provides a ligand contact to Fe cation.

This sequence belongs to the KAE1 / TsaD family. Requires Fe(2+) as cofactor.

The protein localises to the cytoplasm. The enzyme catalyses L-threonylcarbamoyladenylate + adenosine(37) in tRNA = N(6)-L-threonylcarbamoyladenosine(37) in tRNA + AMP + H(+). Its function is as follows. Required for the formation of a threonylcarbamoyl group on adenosine at position 37 (t(6)A37) in tRNAs that read codons beginning with adenine. Is involved in the transfer of the threonylcarbamoyl moiety of threonylcarbamoyl-AMP (TC-AMP) to the N6 group of A37, together with TsaE and TsaB. TsaD likely plays a direct catalytic role in this reaction. The sequence is that of tRNA N6-adenosine threonylcarbamoyltransferase from Rhodopseudomonas palustris (strain HaA2).